Consider the following 391-residue polypeptide: MGYPVIVEATRSPIGKRNGWLSGLHATELLGAVQKAVVDKAGIQSGLHAGDVEQVIGGCVTQFGEQSNNISRVAWLTAGLPEHVGATTVDCQCGSGQQANHLIAGLIAAGAIDVGIACGIEAMSRVGLGANAGPDRSLIRAQSWDIDLPNQFEAAERIAKRRGITREDVDVFGLESQRRAQRAWAEGRFDREISPIQAPVLDEQNQPTGERRLVFRDQGLRETTMAGLGELKPVLEGGIHTAGTSSQISDGAAAVLWMDEAVARAHGLTPRARIVAQALVGAEPYYHLDGPVQSTAKVLEKAGMKIGDIDIVEINEAFASVVLSWARVHEPDMDRVNVNGGAIALGHPVGCTGSRLITTALHELERTDQSLALITMCAGGALSTGTIIERI.

The active-site Acyl-thioester intermediate is cysteine 93. Residues glutamine 151, arginine 221–threonine 223, and serine 246 contribute to the CoA site. Active-site proton acceptor residues include histidine 347 and cysteine 377. Substrate is bound at residue glycine 379.

Belongs to the thiolase-like superfamily. Thiolase family. In terms of assembly, dimer of dimers.

It catalyses the reaction an acyl-CoA + acetyl-CoA = a 3-oxoacyl-CoA + CoA. The catalysed reaction is 3-oxochol-4-en-22-oyl-CoA + acetyl-CoA = 3,22-dioxochol-4-en-24-oyl-CoA + CoA. Its pathway is steroid metabolism; cholesterol degradation. Its function is as follows. Involved in the beta-oxidation of the cholesterol side chain. It is important for utilization of cholesterol as a sole carbon source in vitro and for full virulence in the chronic stage of mouse lung infection. Catalyzes the thiolysis of 3,22-dioxochol-4-en-24-oyl-CoA to yield 3-oxo-4-pregnene-20-carboxyl-CoA (3-OPC-CoA) and acetyl-CoA. Also able to use acetoacetyl-CoA (AcAcCoA) as substrate. The protein is Steroid 3-ketoacyl-CoA thiolase (fadA5) of Mycobacterium tuberculosis (strain ATCC 25618 / H37Rv).